The following is a 295-amino-acid chain: Phosphatidylserine decarboxylase proenzyme (295 aa).

Catalysis depends on charge relay system; for autoendoproteolytic cleavage activity residues aspartate 113, histidine 169, and serine 256. The active-site Schiff-base intermediate with substrate; via pyruvic acid; for decarboxylase activity is the serine 256. Pyruvic acid (Ser); by autocatalysis is present on serine 256.

Belongs to the phosphatidylserine decarboxylase family. PSD-B subfamily. Prokaryotic type II sub-subfamily. As to quaternary structure, heterodimer of a large membrane-associated beta subunit and a small pyruvoyl-containing alpha subunit. The cofactor is pyruvate. In terms of processing, is synthesized initially as an inactive proenzyme. Formation of the active enzyme involves a self-maturation process in which the active site pyruvoyl group is generated from an internal serine residue via an autocatalytic post-translational modification. Two non-identical subunits are generated from the proenzyme in this reaction, and the pyruvate is formed at the N-terminus of the alpha chain, which is derived from the carboxyl end of the proenzyme. The autoendoproteolytic cleavage occurs by a canonical serine protease mechanism, in which the side chain hydroxyl group of the serine supplies its oxygen atom to form the C-terminus of the beta chain, while the remainder of the serine residue undergoes an oxidative deamination to produce ammonia and the pyruvoyl prosthetic group on the alpha chain. During this reaction, the Ser that is part of the protease active site of the proenzyme becomes the pyruvoyl prosthetic group, which constitutes an essential element of the active site of the mature decarboxylase.

The protein resides in the cell membrane. It carries out the reaction a 1,2-diacyl-sn-glycero-3-phospho-L-serine + H(+) = a 1,2-diacyl-sn-glycero-3-phosphoethanolamine + CO2. It participates in phospholipid metabolism; phosphatidylethanolamine biosynthesis; phosphatidylethanolamine from CDP-diacylglycerol: step 2/2. Its function is as follows. Catalyzes the formation of phosphatidylethanolamine (PtdEtn) from phosphatidylserine (PtdSer). In Clostridium botulinum (strain Langeland / NCTC 10281 / Type F), this protein is Phosphatidylserine decarboxylase proenzyme.